We begin with the raw amino-acid sequence, 1415 residues long: DNA-directed RNA polymerase subunit beta'' (1415 aa).

Positions 217, 291, 298, and 301 each coordinate Zn(2+).

This sequence belongs to the RNA polymerase beta' chain family. RpoC2 subfamily. As to quaternary structure, in plastids the minimal PEP RNA polymerase catalytic core is composed of four subunits: alpha, beta, beta', and beta''. When a (nuclear-encoded) sigma factor is associated with the core the holoenzyme is formed, which can initiate transcription. The cofactor is Zn(2+).

Its subcellular location is the plastid. The protein localises to the chloroplast. It catalyses the reaction RNA(n) + a ribonucleoside 5'-triphosphate = RNA(n+1) + diphosphate. Its function is as follows. DNA-dependent RNA polymerase catalyzes the transcription of DNA into RNA using the four ribonucleoside triphosphates as substrates. The sequence is that of DNA-directed RNA polymerase subunit beta'' from Phaeodactylum tricornutum (strain CCAP 1055/1).